A 466-amino-acid chain; its full sequence is Cysteine--tRNA ligase (466 aa).

Cysteine 29 lines the Zn(2+) pocket. The 'HIGH' region signature appears at 31–41 (PTVYDFAHIGN). The Zn(2+) site is built by cysteine 210, histidine 235, and glutamate 239. The short motif at 267–271 (KMSKS) is the 'KMSKS' region element. Lysine 270 lines the ATP pocket.

This sequence belongs to the class-I aminoacyl-tRNA synthetase family. In terms of assembly, monomer. It depends on Zn(2+) as a cofactor.

It localises to the cytoplasm. The enzyme catalyses tRNA(Cys) + L-cysteine + ATP = L-cysteinyl-tRNA(Cys) + AMP + diphosphate. This chain is Cysteine--tRNA ligase, found in Solibacter usitatus (strain Ellin6076).